The primary structure comprises 186 residues: Ribonuclease HII (186 aa).

The RNase H type-2 domain occupies 2–186; the sequence is KILAGVDEVG…KTFSPISDLL (185 aa). 3 residues coordinate a divalent metal cation: aspartate 8, glutamate 9, and aspartate 99.

Belongs to the RNase HII family. Mn(2+) serves as cofactor. Mg(2+) is required as a cofactor.

Its subcellular location is the cytoplasm. It catalyses the reaction Endonucleolytic cleavage to 5'-phosphomonoester.. Endonuclease that specifically degrades the RNA of RNA-DNA hybrids. This chain is Ribonuclease HII, found in Pelagibacter ubique (strain HTCC1062).